The primary structure comprises 444 residues: Zeaxanthin 4-ketolase (444 aa).

Residues 408-444 (VAGGSSSGGGGEGGKPGAGEHGLLQRQRQLAPVGVMA) form a disordered region. Gly residues predominate over residues 412-427 (SSSGGGGEGGKPGAGE).

The catalysed reaction is all-trans-adonixanthin + 2 AH2 + 2 O2 = all-trans-(3S,3'S)-astaxanthin + 2 A + 3 H2O. It catalyses the reaction all-trans-zeaxanthin + 2 AH2 + 2 O2 = all-trans-adonixanthin + 2 A + 3 H2O. The enzyme catalyses echinenone + 2 AH2 + 2 O2 = canthaxanthin + 2 A + 3 H2O. It carries out the reaction all-trans-beta-carotene + 2 AH2 + 2 O2 = echinenone + 2 A + 3 H2O. The protein operates within carotenoid biosynthesis; astaxanthin biosynthesis. Functionally, involved in the biosynthesis of ketocarotenoids which are powerful anti-oxidative molecules. Catalyzes the conversion of zeaxanthin to astaxanthin via adonixanthin. Catalyzes the conversion of beta-carotene to canthaxanthin via echinenone. In Chlamydomonas reinhardtii (Chlamydomonas smithii), this protein is Zeaxanthin 4-ketolase.